The sequence spans 139 residues: ATP synthase epsilon chain (139 aa).

It belongs to the ATPase epsilon chain family. As to quaternary structure, F-type ATPases have 2 components, CF(1) - the catalytic core - and CF(0) - the membrane proton channel. CF(1) has five subunits: alpha(3), beta(3), gamma(1), delta(1), epsilon(1). CF(0) has three main subunits: a, b and c.

It is found in the cell membrane. Produces ATP from ADP in the presence of a proton gradient across the membrane. The polypeptide is ATP synthase epsilon chain (Streptococcus sanguinis).